The following is a 291-amino-acid chain: GCN5-related N-acetyltransferase 4, chloroplastic (291 aa).

The transit peptide at 1–61 (MRSTPLGTTA…PSQINSGACN (61 aa)) directs the protein to the chloroplast. Residues 76 to 280 (IVVREARLED…RFTFMMKLVN (205 aa)) form the N-acetyltransferase domain. Acetyl-CoA-binding positions include 199-201 (VAV) and 207-212 (RKGIAK). N6-acetyllysine is present on Lys217. Residues 238–240 (NLG) and Tyr245 contribute to the acetyl-CoA site. The Proton donor role is filled by Tyr245. An N6-acetyllysine mark is found at Lys254 and Lys265.

This sequence belongs to the acetyltransferase family. GNAT subfamily. In terms of assembly, oligomer. In terms of processing, autoacetylated at K-217, K-254 and K-265. Expressed in green tissues.

It is found in the plastid. It localises to the chloroplast. The catalysed reaction is an N-terminal L-alpha-aminoacyl-[protein] + acetyl-CoA = N-terminal N(alpha)-acetyl-L-alpha-aminoacyl-[protein] + CoA + H(+). It carries out the reaction L-lysyl-[protein] + acetyl-CoA = N(6)-acetyl-L-lysyl-[protein] + CoA + H(+). The enzyme catalyses N-terminal L-alanyl-[protein] + acetyl-CoA = N-terminal N(alpha)-acetyl-L-alanyl-[protein] + CoA + H(+). It catalyses the reaction N-terminal L-seryl-[protein] + acetyl-CoA = N-terminal N(alpha)-acetyl-L-seryl-[protein] + CoA + H(+). The catalysed reaction is N-terminal L-threonyl-[protein] + acetyl-CoA = N-terminal N(alpha)-acetyl-L-threonyl-[protein] + CoA + H(+). It carries out the reaction N-terminal L-methionyl-[protein] + acetyl-CoA = N-terminal N(alpha)-acetyl-L-methionyl-[protein] + CoA + H(+). The enzyme catalyses N-terminal L-valyl-[protein] + acetyl-CoA = N-terminal N(alpha)-acetyl-L-valyl-[protein] + CoA + H(+). It catalyses the reaction N-terminal glycyl-[protein] + acetyl-CoA = N-terminal N(alpha)-acetylglycyl-[protein] + CoA + H(+). Protein acetyltransferase with dual specificity triggering both N-alpha-acetylation (NTA), with a large spectrum of modified N-termini, including methionine, alanine, serine, threonine and to a lower extent glycine and valine as substrates, and epsilon-lysine acetylation (KA) of several plastid proteins. The polypeptide is GCN5-related N-acetyltransferase 4, chloroplastic (Arabidopsis thaliana (Mouse-ear cress)).